We begin with the raw amino-acid sequence, 431 residues long: Probable carboxylic ester hydrolase LipM (431 aa).

The next 3 helical transmembrane spans lie at 7-27, 38-58, and 75-95; these read IHVI…AATI, FASL…LPTL, and PVRA…LNLS. Active-site residues include Ser261, Asp357, and His390.

This sequence belongs to the 'GDXG' lipolytic enzyme family.

Its subcellular location is the membrane. In Mycobacterium tuberculosis (strain ATCC 25618 / H37Rv), this protein is Probable carboxylic ester hydrolase LipM.